A 396-amino-acid polypeptide reads, in one-letter code: RNA-binding motif protein, X chromosome (396 aa).

Met1 bears the N-acetylmethionine; in Heterogeneous nuclear ribonucleoprotein G; alternate mark. The residue at position 2 (Val2) is an N-acetylvaline; in Heterogeneous nuclear ribonucleoprotein G, N-terminally processed. Residues 8–86 (GKLFIGGLNL…KAIKVAQATK (79 aa)) enclose the RRM domain. A Glycyl lysine isopeptide (Lys-Gly) (interchain with G-Cter in SUMO2) cross-link involves residue Lys22. Lys30 carries the N6-acetyllysine modification. Residues Lys80 and Lys86 each participate in a glycyl lysine isopeptide (Lys-Gly) (interchain with G-Cter in SUMO2) cross-link. The segment at 84–396 (ATKPAFESGR…RGGGGGRSRY (313 aa)) is disordered. Phosphoserine is present on Ser91. 4 positions are modified to omega-N-methylarginine: Arg122, Arg141, Arg162, and Arg170. Residues 148-162 (RGPPPPRRAGPPPKR) show a composition bias toward pro residues. Composition is skewed to basic and acidic residues over residues 185–205 (RGRD…RRDP) and 241–275 (YTYR…DYAD). Residues 186–236 (GRDGYEGPPRRDPPPPRRDPYLGSREGGYSPRDGYSSRDYSSARDARDFAP) are necessary for the association to nascent RNAPII transcripts and nuclear localization. Positions 323-332 (YGGGRDGYAG) are enriched in gly residues. Over residues 334-350 (RSERYSGGRDRVGRADR) the composition is skewed to basic and acidic residues. Ser335 and Ser355 each carry phosphoserine. Positions 336–396 (ERYSGGRDRV…RGGGGGRSRY (61 aa)) are necessary for RNA-binding.

As to quaternary structure, homomultimer. Found in the supraspliceosome complex. Identified in the spliceosome C complex. Forms a complex with ILF2, ILF3, YLPM1, KHDRBS1, NCOA5 and PPP1CA. Interacts with CLK2, KHDRBS2, KHDRBS3, SAFB/SAFB1, TRA2B and YTHDC1. Interacts with ERAP1; the interaction is RNA-independent. In terms of processing, O-glycosylated. Arg-185 is dimethylated, probably to asymmetric dimethylarginine.

The protein localises to the nucleus. Its function is as follows. RNA-binding protein that plays several role in the regulation of pre- and post-transcriptional processes. Implicated in tissue-specific regulation of gene transcription and alternative splicing of several pre-mRNAs. Binds to and stimulates transcription from the tumor suppressor TXNIP gene promoter; may thus be involved in tumor suppression. When associated with SAFB, binds to and stimulates transcription from the SREBF1 promoter. Associates with nascent mRNAs transcribed by RNA polymerase II. Component of the supraspliceosome complex that regulates pre-mRNA alternative splice site selection. Can either activate or suppress exon inclusion; acts additively with TRA2B to promote exon 7 inclusion of the survival motor neuron SMN2. Represses the splicing of MAPT/Tau exon 10. Binds preferentially to single-stranded 5'-CC[A/C]-rich RNA sequence motifs localized in a single-stranded conformation; probably binds RNA as a homodimer. Binds non-specifically to pre-mRNAs. Also plays a role in the cytoplasmic TNFR1 trafficking pathways; promotes both the IL-1-beta-mediated inducible proteolytic cleavage of TNFR1 ectodomains and the release of TNFR1 exosome-like vesicles to the extracellular compartment. This Bos taurus (Bovine) protein is RNA-binding motif protein, X chromosome (RBMX).